Reading from the N-terminus, the 4008-residue chain is Extracellular matrix organizing protein FRAS1 (4008 aa).

The signal sequence occupies residues 1–26 (MGVLKVWLGLALALAEFAVLPHHSEG). 5 consecutive VWFC domains span residues 27–88 (ACVY…PECV), 93–153 (GSCH…PVCV), 157–217 (KPCS…PQCS), 219–279 (RSCS…EECV), and 283–343 (GSCS…PECI). Residues 27-3901 (ACVYQDSLLA…AASLSQTGAS (3875 aa)) are Extracellular-facing. Position 344 is a phosphoserine (serine 344). The 71-residue stretch at 347–417 (GYCVYEETGE…VKGQCCPDCT (71 aa)) folds into the VWFC 6 domain. Residue asparagine 361 is glycosylated (N-linked (GlcNAc...) asparagine). FU repeat units lie at residues 409–460 (KGQC…GFYQ), 462–505 (GSLC…GFYQ), 507–553 (RHSC…GFYN), 555–599 (QGTC…GYYA), 602–647 (TGRC…GFYS), 649–705 (HGVC…HFYL), 708–753 (TGIC…GYFH), 755–800 (EGSC…EQFL), 803–852 (VGYC…GYYA), 854–900 (RGAC…GHYL), 903–948 (NHVC…QYYL), 952–997 (TNTC…SFYQ), 999–1042 (SGLC…GYFA), and 1046–1089 (KHKC…GFSV). A glycan (N-linked (GlcNAc...) asparagine) is linked at asparagine 728. N-linked (GlcNAc...) asparagine glycosylation is found at asparagine 1093 and asparagine 1108. CSPG repeat units lie at residues 1102 to 1197 (TPSL…LKIS), 1217 to 1308 (APYV…LQAN), 1329 to 1438 (GLQL…FEVS), 1463 to 1559 (APKV…FSFA), 1595 to 1689 (PVFQ…ISVT), 1710 to 1810 (GPRL…FSVS), and 1833 to 1936 (PPVI…FYVS). The N-linked (GlcNAc...) asparagine glycan is linked to asparagine 1504. The N-linked (GlcNAc...) asparagine glycan is linked to asparagine 1777. N-linked (GlcNAc...) asparagine glycosylation is found at asparagine 1948 and asparagine 1978. 5 CSPG repeats span residues 1957–2057 (EPPR…FSLT), 2078–2177 (TPHL…FDVV), 2199–2291 (PPVI…FTLS), 2311–2404 (SLPV…FTVS), and 2439–2536 (TPRI…FLVK). 5 Calx-beta domains span residues 2543 to 2646 (VSDN…VELS), 2659 to 2770 (AKVI…IALA), 2784 to 2890 (AKVL…VFLS), 2905 to 3007 (IAIN…VYLG), and 3025 to 3129 (ATIT…LVLG). Asparagine 2563, asparagine 2664, and asparagine 2682 each carry an N-linked (GlcNAc...) asparagine glycan. N-linked (GlcNAc...) asparagine glycosylation is found at asparagine 2908, asparagine 2985, asparagine 3070, asparagine 3218, asparagine 3676, and asparagine 3875. A helical membrane pass occupies residues 3902 to 3922 (IGSALAAIMLLLLVFLVACFI). Topologically, residues 3923–4008 (NRKCQKQRKK…HNNLQDGTEV (86 aa)) are cytoplasmic.

This sequence belongs to the FRAS1 family. In terms of tissue distribution, expressed in many adult tissues, with highest levels in kidney, pancreas and thalamus. Relatively high expression was also detected in fetal kidney and heart.

It is found in the cell membrane. Its function is as follows. Involved in extracellular matrix organization. Required for the regulation of epidermal-basement membrane adhesion responsible for proper organogenesis during embryonic development. Involved in brain organization and function. This is Extracellular matrix organizing protein FRAS1 from Homo sapiens (Human).